We begin with the raw amino-acid sequence, 405 residues long: Serpin B12 (405 aa).

Residues 64–83 (SQNESKEPDPCLKSNKQKAG) form a disordered region.

This sequence belongs to the serpin family. Ov-serpin subfamily. In terms of assembly, interacts with SLFN12; as part of a pathway regulating cell differentiation. May interact with USP14. In terms of tissue distribution, expressed in many tissues, including brain, bone marrow, lymph node, heart, lung, liver, pancreas, testis, ovary, and intestine.

It localises to the cytoplasm. Its function is as follows. Inhibits trypsin and plasmin, but not thrombin, coagulation factor Xa, or urokinase-type plasminogen activator. May play a role in cell differentiation. This chain is Serpin B12 (SERPINB12), found in Homo sapiens (Human).